The primary structure comprises 121 residues: Large ribosomal subunit protein uL18 (121 aa).

The protein belongs to the universal ribosomal protein uL18 family. In terms of assembly, part of the 50S ribosomal subunit; part of the 5S rRNA/L5/L18/L25 subcomplex. Contacts the 5S and 23S rRNAs.

In terms of biological role, this is one of the proteins that bind and probably mediate the attachment of the 5S RNA into the large ribosomal subunit, where it forms part of the central protuberance. The protein is Large ribosomal subunit protein uL18 of Polaromonas sp. (strain JS666 / ATCC BAA-500).